Here is a 602-residue protein sequence, read N- to C-terminus: Elongation factor 4 (602 aa).

In terms of domain architecture, tr-type G spans 7-189 (RKIRNFSIIA…AIVKNIPPPT (183 aa)). Residues 19 to 24 (DHGKST) and 136 to 139 (NKID) each bind GTP.

It belongs to the TRAFAC class translation factor GTPase superfamily. Classic translation factor GTPase family. LepA subfamily.

It is found in the cell membrane. The catalysed reaction is GTP + H2O = GDP + phosphate + H(+). Its function is as follows. Required for accurate and efficient protein synthesis under certain stress conditions. May act as a fidelity factor of the translation reaction, by catalyzing a one-codon backward translocation of tRNAs on improperly translocated ribosomes. Back-translocation proceeds from a post-translocation (POST) complex to a pre-translocation (PRE) complex, thus giving elongation factor G a second chance to translocate the tRNAs correctly. Binds to ribosomes in a GTP-dependent manner. This is Elongation factor 4 from Alkaliphilus metalliredigens (strain QYMF).